The chain runs to 207 residues: Uridine kinase (207 aa).

Residue 11–18 (GGSGSGKT) participates in ATP binding.

Belongs to the uridine kinase family.

The protein resides in the cytoplasm. It catalyses the reaction uridine + ATP = UMP + ADP + H(+). The catalysed reaction is cytidine + ATP = CMP + ADP + H(+). It functions in the pathway pyrimidine metabolism; CTP biosynthesis via salvage pathway; CTP from cytidine: step 1/3. Its pathway is pyrimidine metabolism; UMP biosynthesis via salvage pathway; UMP from uridine: step 1/1. The polypeptide is Uridine kinase (Staphylococcus haemolyticus (strain JCSC1435)).